Reading from the N-terminus, the 207-residue chain is Fibroblast growth factor 18 (207 aa).

An N-terminal signal peptide occupies residues 1–27; sequence MYSAPSTCTCLCLHFLLLCFQVQVLAA. N39 carries N-linked (GlcNAc...) asparagine glycosylation. C109 and C127 are joined by a disulfide. N137 carries an N-linked (GlcNAc...) asparagine glycan.

This sequence belongs to the heparin-binding growth factors family. As to quaternary structure, interacts with FGFR3 and FGFR4.

Its subcellular location is the secreted. In terms of biological role, plays an important role in the regulation of cell proliferation, cell differentiation and cell migration. Required for normal ossification and bone development. Stimulates hepatic and intestinal proliferation. The sequence is that of Fibroblast growth factor 18 (FGF18) from Bos taurus (Bovine).